Reading from the N-terminus, the 145-residue chain is Selenoprotein M (145 aa).

A signal peptide spans 1–23; that stretch reads MSLLLPPLALLLLLAALVAPATA. Active-site nucleophile residues include cysteine 45 and selenocysteine 48. The segment at residues 45–48 is a cross-link (cysteinyl-selenocysteine (Cys-Sec)); that stretch reads CGGU. Position 48 (selenocysteine 48) is a non-standard amino acid, selenocysteine.

Belongs to the selenoprotein M/F family. In terms of tissue distribution, widely expressed.

Its subcellular location is the cytoplasm. The protein localises to the perinuclear region. The protein resides in the endoplasmic reticulum. It is found in the golgi apparatus. Its function is as follows. May function as a thiol-disulfide oxidoreductase that participates in disulfide bond formation. This chain is Selenoprotein M, found in Homo sapiens (Human).